A 229-amino-acid chain; its full sequence is Peptidase E (229 aa).

Catalysis depends on charge relay system residues serine 120, aspartate 135, and histidine 157.

It belongs to the peptidase S51 family.

It is found in the cytoplasm. The enzyme catalyses Dipeptidase E catalyzes the hydrolysis of dipeptides Asp-|-Xaa. It does not act on peptides with N-terminal Glu, Asn or Gln, nor does it cleave isoaspartyl peptides.. Functionally, hydrolyzes dipeptides containing N-terminal aspartate residues. May play a role in allowing the cell to use peptide aspartate to spare carbon otherwise required for the synthesis of the aspartate family of amino acids. The protein is Peptidase E of Salmonella arizonae (strain ATCC BAA-731 / CDC346-86 / RSK2980).